The chain runs to 446 residues: L-2-hydroxyglutarate dehydrogenase, mitochondrial (446 aa).

Residues 1–28 (MKNSSSMLKGVKSFIGSGIYTNKPIYDV) constitute a mitochondrion transit peptide.

The protein belongs to the L2HGDH family. Requires FAD as cofactor.

The protein localises to the mitochondrion. It carries out the reaction (S)-2-hydroxyglutarate + A = 2-oxoglutarate + AH2. The protein is L-2-hydroxyglutarate dehydrogenase, mitochondrial (l2hgdh) of Dictyostelium discoideum (Social amoeba).